Consider the following 316-residue polypeptide: Glutathione synthetase (316 aa).

One can recognise an ATP-grasp domain in the interval 125–311; it reads KLFTAWFPEL…ITGMLMNAIE (187 aa). 151-207 is an ATP binding site; sequence HQKHGDVIFKPLDGMGGASIFRLKKDDPNVGVIIETLTEHGNRFCMAQNFLPAIKEG. Mg(2+) is bound by residues glutamate 281 and asparagine 283.

The protein belongs to the prokaryotic GSH synthase family. The cofactor is Mg(2+). Mn(2+) serves as cofactor.

It catalyses the reaction gamma-L-glutamyl-L-cysteine + glycine + ATP = glutathione + ADP + phosphate + H(+). Its pathway is sulfur metabolism; glutathione biosynthesis; glutathione from L-cysteine and L-glutamate: step 2/2. The sequence is that of Glutathione synthetase from Photorhabdus laumondii subsp. laumondii (strain DSM 15139 / CIP 105565 / TT01) (Photorhabdus luminescens subsp. laumondii).